We begin with the raw amino-acid sequence, 433 residues long: uncharacterized protein (433 aa).

The signal sequence occupies residues Met1–Ser26. Residues Asn59, Asn72, Asn125, Asn159, Asn210, Asn275, Asn282, and Asn323 are each glycosylated (N-linked (GlcNAc...) asparagine). The GPI-anchor amidated alanine moiety is linked to residue Ala405. Positions Ser406–Ser433 are cleaved as a propeptide — removed in mature form.

The protein resides in the cell membrane. This is an uncharacterized protein from Arabidopsis thaliana (Mouse-ear cress).